Here is an 823-residue protein sequence, read N- to C-terminus: Spindle pole body component SPC97 (823 aa).

It belongs to the TUBGCP family. In terms of assembly, interacts with TUB4, SPC72 and SPC98.

Its subcellular location is the nucleus. The protein resides in the cytoplasm. It localises to the cytoskeleton. The protein localises to the microtubule organizing center. It is found in the spindle pole body. Involved in microtubule organization by the microtubule organizing center, the spindle pole body (SPB). Probably part of the microtubule attachment site at the SPB. The polypeptide is Spindle pole body component SPC97 (SPC97) (Saccharomyces cerevisiae (strain ATCC 204508 / S288c) (Baker's yeast)).